The primary structure comprises 582 residues: UPF0329 protein ECU07_0070 (582 aa).

Positions 326 to 386 (EEKAKSKKKG…KTGKKSKGDQ (61 aa)) are disordered. The segment covering 330–339 (KSKKKGKKKS) has biased composition (basic residues). A compositionally biased stretch (basic and acidic residues) spans 344–354 (EAKEEEKKESG).

It belongs to the UPF0329 family.

In Encephalitozoon cuniculi (strain GB-M1) (Microsporidian parasite), this protein is UPF0329 protein ECU07_0070.